A 497-amino-acid chain; its full sequence is Cytochrome P450 2D19 (497 aa).

Residue cysteine 443 coordinates heme.

This sequence belongs to the cytochrome P450 family. Heme is required as a cofactor.

The protein resides in the endoplasmic reticulum membrane. The protein localises to the microsome membrane. The enzyme catalyses an organic molecule + reduced [NADPH--hemoprotein reductase] + O2 = an alcohol + oxidized [NADPH--hemoprotein reductase] + H2O + H(+). In terms of biological role, responsible for the metabolism of many drugs and environmental chemicals that it oxidizes. In Callithrix jacchus (White-tufted-ear marmoset), this protein is Cytochrome P450 2D19 (CYP2D19).